The primary structure comprises 170 residues: Plastocyanin, chloroplastic (170 aa).

The transit peptide at 1 to 71 (MATVTSAAVA…SAMLASNAMA (71 aa)) directs the protein to the chloroplast. One can recognise a Plastocyanin-like domain in the interval 72–170 (LEVLLGGDDG…AGMVGKVTVN (99 aa)). His108, Cys155, His158, and Met163 together coordinate Cu cation.

This sequence belongs to the plastocyanin family. Cu(2+) is required as a cofactor.

Its subcellular location is the plastid. It localises to the chloroplast thylakoid membrane. Its function is as follows. Participates in electron transfer between P700 and the cytochrome b6-f complex in photosystem I. The chain is Plastocyanin, chloroplastic (PETE) from Solanum lycopersicum (Tomato).